The following is a 378-amino-acid chain: MKLKFDLKKKNGNARRGQLTFERGTVQTPAFMPVGTYGTVKGMTPEEVKETGAEILLGNTFHLWLRPGQEVMKMHGDLHDFMNWQGPILTDSGGFQVFSLGDIRKITEEGVHFRNPVNGDKIFMDAEKSMEIQKDLGSDIVMIFDECTPYPATHAEAKKSMEMSLRWAQRSRDHFDKLENPNNLFGIVQGGVYEDLRDVSVKGLTEIGFDGYAVGGLAVGEPKEDMHRVLEHTCPQLPEDKPRYLMGVGKPEDLVEGVRRGIDMFDCVMPTRNARNGHLFVTGGVIKIRNATHKTDTTPLDPHCDCYTCKNYSKSYLHHLDRCNEILGARLNTIHNLRYYQRLMESIRKAIDEDRFEQFVEEFYARRNREVPPLGKQA.

Asp-91 acts as the Proton acceptor in catalysis. Residues 91–95 (DSGGF), Asp-145, Gln-189, and Gly-216 contribute to the substrate site. An RNA binding region spans residues 247–253 (GVGKPED). Asp-266 (nucleophile) is an active-site residue. The segment at 271 to 275 (TRNAR) is RNA binding; important for wobble base 34 recognition. Zn(2+) contacts are provided by Cys-304, Cys-306, Cys-309, and His-335.

This sequence belongs to the queuine tRNA-ribosyltransferase family. As to quaternary structure, homodimer. Within each dimer, one monomer is responsible for RNA recognition and catalysis, while the other monomer binds to the replacement base PreQ1. Requires Zn(2+) as cofactor.

The catalysed reaction is 7-aminomethyl-7-carbaguanine + guanosine(34) in tRNA = 7-aminomethyl-7-carbaguanosine(34) in tRNA + guanine. It participates in tRNA modification; tRNA-queuosine biosynthesis. Functionally, catalyzes the base-exchange of a guanine (G) residue with the queuine precursor 7-aminomethyl-7-deazaguanine (PreQ1) at position 34 (anticodon wobble position) in tRNAs with GU(N) anticodons (tRNA-Asp, -Asn, -His and -Tyr). Catalysis occurs through a double-displacement mechanism. The nucleophile active site attacks the C1' of nucleotide 34 to detach the guanine base from the RNA, forming a covalent enzyme-RNA intermediate. The proton acceptor active site deprotonates the incoming PreQ1, allowing a nucleophilic attack on the C1' of the ribose to form the product. After dissociation, two additional enzymatic reactions on the tRNA convert PreQ1 to queuine (Q), resulting in the hypermodified nucleoside queuosine (7-(((4,5-cis-dihydroxy-2-cyclopenten-1-yl)amino)methyl)-7-deazaguanosine). The chain is Queuine tRNA-ribosyltransferase from Vibrio vulnificus (strain CMCP6).